The following is a 705-amino-acid chain: Ribosomal RNA large subunit methyltransferase K/L (705 aa).

A THUMP domain is found at 43 to 154; it reads LMYQSLMWSR…KDTASIALDL (112 aa).

This sequence belongs to the methyltransferase superfamily. RlmKL family.

Its subcellular location is the cytoplasm. It catalyses the reaction guanosine(2445) in 23S rRNA + S-adenosyl-L-methionine = N(2)-methylguanosine(2445) in 23S rRNA + S-adenosyl-L-homocysteine + H(+). The catalysed reaction is guanosine(2069) in 23S rRNA + S-adenosyl-L-methionine = N(2)-methylguanosine(2069) in 23S rRNA + S-adenosyl-L-homocysteine + H(+). Functionally, specifically methylates the guanine in position 2445 (m2G2445) and the guanine in position 2069 (m7G2069) of 23S rRNA. In Erwinia tasmaniensis (strain DSM 17950 / CFBP 7177 / CIP 109463 / NCPPB 4357 / Et1/99), this protein is Ribosomal RNA large subunit methyltransferase K/L.